Reading from the N-terminus, the 471-residue chain is ATP synthase subunit beta (471 aa).

ATP is bound at residue 156 to 163 (GGAGVGKT).

Belongs to the ATPase alpha/beta chains family. In terms of assembly, F-type ATPases have 2 components, CF(1) - the catalytic core - and CF(0) - the membrane proton channel. CF(1) has five subunits: alpha(3), beta(3), gamma(1), delta(1), epsilon(1). CF(0) has three main subunits: a(1), b(2) and c(9-12). The alpha and beta chains form an alternating ring which encloses part of the gamma chain. CF(1) is attached to CF(0) by a central stalk formed by the gamma and epsilon chains, while a peripheral stalk is formed by the delta and b chains.

The protein resides in the cell membrane. It carries out the reaction ATP + H2O + 4 H(+)(in) = ADP + phosphate + 5 H(+)(out). Functionally, produces ATP from ADP in the presence of a proton gradient across the membrane. The catalytic sites are hosted primarily by the beta subunits. This chain is ATP synthase subunit beta, found in Macrococcus caseolyticus (strain JCSC5402) (Macrococcoides caseolyticum).